Consider the following 477-residue polypeptide: Ribulose bisphosphate carboxylase large chain (477 aa).

A propeptide spanning residues 1-2 is cleaved from the precursor; sequence MS. Proline 3 carries the N-acetylproline modification. The residue at position 14 (lysine 14) is an N6,N6,N6-trimethyllysine. Substrate contacts are provided by asparagine 123 and threonine 173. Residue lysine 175 is the Proton acceptor of the active site. Residue lysine 177 coordinates substrate. Positions 201, 203, and 204 each coordinate Mg(2+). N6-carboxylysine is present on lysine 201. Histidine 294 (proton acceptor) is an active-site residue. Arginine 295, histidine 327, and serine 379 together coordinate substrate.

This sequence belongs to the RuBisCO large chain family. Type I subfamily. As to quaternary structure, heterohexadecamer of 8 large chains and 8 small chains; disulfide-linked. The disulfide link is formed within the large subunit homodimers. Mg(2+) serves as cofactor. The disulfide bond which can form in the large chain dimeric partners within the hexadecamer appears to be associated with oxidative stress and protein turnover.

It localises to the plastid. The protein localises to the chloroplast. It catalyses the reaction 2 (2R)-3-phosphoglycerate + 2 H(+) = D-ribulose 1,5-bisphosphate + CO2 + H2O. The catalysed reaction is D-ribulose 1,5-bisphosphate + O2 = 2-phosphoglycolate + (2R)-3-phosphoglycerate + 2 H(+). Its function is as follows. RuBisCO catalyzes two reactions: the carboxylation of D-ribulose 1,5-bisphosphate, the primary event in carbon dioxide fixation, as well as the oxidative fragmentation of the pentose substrate in the photorespiration process. Both reactions occur simultaneously and in competition at the same active site. This Digitalis purpurea (Common foxglove) protein is Ribulose bisphosphate carboxylase large chain.